The primary structure comprises 249 residues: Eukaryotic translation initiation factor 3 subunit K (249 aa).

The PCI domain maps to 46-222 (FDCYANLALL…VKVPSNKENE (177 aa)).

It belongs to the eIF-3 subunit K family. In terms of assembly, component of the eukaryotic translation initiation factor 3 (eIF-3) complex.

The protein localises to the cytoplasm. Its function is as follows. Component of the eukaryotic translation initiation factor 3 (eIF-3) complex, which is involved in protein synthesis of a specialized repertoire of mRNAs and, together with other initiation factors, stimulates binding of mRNA and methionyl-tRNAi to the 40S ribosome. The eIF-3 complex specifically targets and initiates translation of a subset of mRNAs involved in cell proliferation. This chain is Eukaryotic translation initiation factor 3 subunit K, found in Aspergillus clavatus (strain ATCC 1007 / CBS 513.65 / DSM 816 / NCTC 3887 / NRRL 1 / QM 1276 / 107).